Consider the following 2195-residue polypeptide: Integrator complex subunit 1 (2195 aa).

A disordered region spans residues 1–86; it reads MNRAKPTTVR…RPKLSSTPPL (86 aa). A Phosphoserine modification is found at Ser-13. Over residues 34-45 the composition is skewed to polar residues; sequence GQASESKTTSTL. Lys-47 carries the post-translational modification N6-acetyllysine. Residues 62–75 are compositionally biased toward low complexity; the sequence is SASLSGTSALTGLT. Thr-83 carries the phosphothreonine modification. A Phosphoserine modification is found at Ser-87. Residues 267–297 form a disordered region; that stretch reads LLQGEGARSGGELGAGSSPHPSLTEEEDSQT. Ser-307 and Ser-926 each carry phosphoserine. The interval 923 to 947 is disordered; it reads STASGEEDDEGESREQKAKKRQRQQ. The chain crosses the membrane as a helical span at residues 1165–1185; it reads HILVVHAMVILLTLGPPRSGD. Positions 1313-1347 are disordered; it reads SLPPRRDSTEAPKPESSPEPPPGQGRTRAGTQVPV. Over residues 1316–1325 the composition is skewed to basic and acidic residues; that stretch reads PRRDSTEAPK. Phosphoserine occurs at positions 1320, 1328, and 1329.

This sequence belongs to the Integrator subunit 1 family. Component of the Integrator complex, composed of core subunits INTS1, INTS2, INTS3, INTS4, INTS5, INTS6, INTS7, INTS8, INTS9/RC74, INTS10, INTS11/CPSF3L, INTS12, INTS13, INTS14 and INTS15. The core complex associates with protein phosphatase 2A subunits PPP2CA and PPP2R1A, to form the Integrator-PP2A (INTAC) complex. Interacts with ESRRB, ESRRB is not a core component of the Integrator complex and this association is a bridge for the interaction with the multiprotein complex Integrator; attracts the transcriptional machinery.

It is found in the nucleus. The protein localises to the nucleus membrane. In terms of biological role, component of the integrator complex, a multiprotein complex that terminates RNA polymerase II (Pol II) transcription in the promoter-proximal region of genes. The integrator complex provides a quality checkpoint during transcription elongation by driving premature transcription termination of transcripts that are unfavorably configured for transcriptional elongation: the complex terminates transcription by (1) catalyzing dephosphorylation of the C-terminal domain (CTD) of Pol II subunit POLR2A/RPB1 and SUPT5H/SPT5, (2) degrading the exiting nascent RNA transcript via endonuclease activity and (3) promoting the release of Pol II from bound DNA. The integrator complex is also involved in terminating the synthesis of non-coding Pol II transcripts, such as enhancer RNAs (eRNAs), small nuclear RNAs (snRNAs), telomerase RNAs and long non-coding RNAs (lncRNAs). Within the integrator complex, INTS1 is involved in the post-termination step: INTS1 displaces INTS3 and the SOSS factors, allowing the integrator complex to return to the closed conformation, ready to bind to the paused elongation complex for another termination cycle. Mediates recruitment of cytoplasmic dynein to the nuclear envelope, probably as component of the integrator complex. This Mus musculus (Mouse) protein is Integrator complex subunit 1.